The primary structure comprises 1405 residues: DNA-directed RNA polymerase subunit beta' (1405 aa).

Cys70, Cys72, Cys85, and Cys88 together coordinate Zn(2+). Positions 460, 462, and 464 each coordinate Mg(2+). Zn(2+) is bound by residues Cys815, Cys890, Cys897, and Cys900.

The protein belongs to the RNA polymerase beta' chain family. The RNAP catalytic core consists of 2 alpha, 1 beta, 1 beta' and 1 omega subunit. When a sigma factor is associated with the core the holoenzyme is formed, which can initiate transcription. The cofactor is Mg(2+). Zn(2+) is required as a cofactor.

The enzyme catalyses RNA(n) + a ribonucleoside 5'-triphosphate = RNA(n+1) + diphosphate. In terms of biological role, DNA-dependent RNA polymerase catalyzes the transcription of DNA into RNA using the four ribonucleoside triphosphates as substrates. The polypeptide is DNA-directed RNA polymerase subunit beta' (Xanthomonas campestris pv. campestris (strain 8004)).